The primary structure comprises 1032 residues: UPF0182 protein sll1060 (1032 aa).

9 helical membrane-spanning segments follow: residues 27-49 (WVKGAIVLAIALVGLEVIARIYV), 69-87 (WQGSIALITGFISWGFIVF), 144-166 (VLLPLIIVLQLILISLVMYYVFI), 197-219 (FSGMGSQLGVTALAGMLALIGVL), 226-248 (PGLVFILSAVWGLLLSGNWFRLL), 283-300 (WWRGLFLFSLLGVTLIIL), 321-339 (HISALGAAVALTLGVEHWL), 364-386 (LPVETGLAIFSMAIAIWLGWLSV), and 406-428 (IIGLWLPVAVYLLILLLQNLGGW).

This sequence belongs to the UPF0182 family.

It is found in the cell membrane. This chain is UPF0182 protein sll1060, found in Synechocystis sp. (strain ATCC 27184 / PCC 6803 / Kazusa).